Here is a 270-residue protein sequence, read N- to C-terminus: Proteasome subunit beta (270 aa).

A propeptide spans 1-47 (MSNRGRLGDAFLRPGSSSFLDFLSDHAPELLPGRSAAAGNAPLAPHA) (removed in mature form; by autocatalysis). T48 (nucleophile) is an active-site residue.

Belongs to the peptidase T1B family. The 20S proteasome core is composed of 14 alpha and 14 beta subunits that assemble into four stacked heptameric rings, resulting in a barrel-shaped structure. The two inner rings, each composed of seven catalytic beta subunits, are sandwiched by two outer rings, each composed of seven alpha subunits. The catalytic chamber with the active sites is on the inside of the barrel. Has a gated structure, the ends of the cylinder being occluded by the N-termini of the alpha-subunits. Is capped by the proteasome-associated ATPase, ARC.

It is found in the cytoplasm. It catalyses the reaction Cleavage of peptide bonds with very broad specificity.. It participates in protein degradation; proteasomal Pup-dependent pathway. Its activity is regulated as follows. The formation of the proteasomal ATPase ARC-20S proteasome complex, likely via the docking of the C-termini of ARC into the intersubunit pockets in the alpha-rings, may trigger opening of the gate for substrate entry. Interconversion between the open-gate and close-gate conformations leads to a dynamic regulation of the 20S proteasome proteolysis activity. In terms of biological role, component of the proteasome core, a large protease complex with broad specificity involved in protein degradation. The protein is Proteasome subunit beta of Xylanimonas cellulosilytica (strain DSM 15894 / JCM 12276 / CECT 5975 / KCTC 9989 / LMG 20990 / NBRC 107835 / XIL07).